A 262-amino-acid polypeptide reads, in one-letter code: tRNA pseudouridine synthase A (262 aa).

D51 functions as the Nucleophile in the catalytic mechanism. Residue Y109 coordinates substrate.

The protein belongs to the tRNA pseudouridine synthase TruA family. In terms of assembly, homodimer.

It carries out the reaction uridine(38/39/40) in tRNA = pseudouridine(38/39/40) in tRNA. Formation of pseudouridine at positions 38, 39 and 40 in the anticodon stem and loop of transfer RNAs. The chain is tRNA pseudouridine synthase A from Aliivibrio fischeri (strain ATCC 700601 / ES114) (Vibrio fischeri).